The following is a 1134-amino-acid chain: Tyrosine-protein kinase receptor Tie-1 (1134 aa).

The first 22 residues, M1 to S22, serve as a signal peptide directing secretion. Over V23–Q755 the chain is Extracellular. Residues C43–A123 form the Ig-like C2-type 1 domain. N-linked (GlcNAc...) asparagine glycans are attached at residues N81 and N159. EGF-like domains follow at residues G212–E254, A256–Q301, and A303–E343. 9 disulfides stabilise this stretch: C226–C235, C229–C242, C244–C253, C266–C276, C270–C289, C291–C300, C313–C325, C319–C331, and C333–C342. The region spanning P349–N440 is the Ig-like C2-type 2 domain. 3 consecutive Fibronectin type-III domains span residues P444 to P543, Q546 to S638, and A642 to G736. N-linked (GlcNAc...) asparagine glycosylation is found at N501, N592, and N705. Residues Q756–V780 form a helical membrane-spanning segment. The Cytoplasmic portion of the chain corresponds to C781–A1134. The 280-residue stretch at I835–V1114 folds into the Protein kinase domain. ATP contacts are provided by residues I841–V849 and K866. Catalysis depends on D975, which acts as the Proton acceptor. Y1003 is modified (phosphotyrosine; by autocatalysis).

The protein belongs to the protein kinase superfamily. Tyr protein kinase family. Tie subfamily. As to quaternary structure, heterodimer with TEK/TIE2. Interacts with SVEP1 (via C-terminus). Post-translationally, phosphorylated on tyrosine residues in response to ANGPT1, most likely by TEK/TIE2. Specifically expressed in developing vascular endothelial cells. Abundantly expressed in lung and heart, moderately in brain, liver and kidney, and weakly in thymus, spleen and testis.

It is found in the cell membrane. The enzyme catalyses L-tyrosyl-[protein] + ATP = O-phospho-L-tyrosyl-[protein] + ADP + H(+). Transmembrane tyrosine-protein kinase that may modulate TEK/TIE2 activity and contribute to the regulation of angiogenesis. The polypeptide is Tyrosine-protein kinase receptor Tie-1 (Tie1) (Mus musculus (Mouse)).